Consider the following 58-residue polypeptide: Light-harvesting protein B-870 alpha chain (58 aa).

At Met1–Arg15 the chain is on the cytoplasmic side. Residues Val16–Leu36 traverse the membrane as a helical segment. His32 is an a bacteriochlorophyll binding site. At Ser37–Gln58 the chain is on the periplasmic side.

This sequence belongs to the antenna complex alpha subunit family. As to quaternary structure, the core complex is formed by different alpha and beta chains, binding bacteriochlorophyll molecules, and arranged most probably in tetrameric structures disposed around the reaction center. The non-pigmented gamma chains may constitute additional components.

It is found in the cell inner membrane. Its function is as follows. Antenna complexes are light-harvesting systems, which transfer the excitation energy to the reaction centers. The polypeptide is Light-harvesting protein B-870 alpha chain (pufA) (Rhodobacter capsulatus (Rhodopseudomonas capsulata)).